The following is a 244-amino-acid chain: Cobalt transport protein CbiM (244 aa).

An N-terminal signal peptide occupies residues 1-20 (MRKITFIAALLSLLPRYALA). 6 consecutive transmembrane segments (helical) span residues 31–51 (KWCLLWYSIYIPFLMAGLIYI), 63–83 (ILLGFAGAFVFALSALKLPSV), 95–115 (LGAILLGPLPMAVIGGIVLLF), 117–137 (ALLLAHGGITTLGANAFSMAV), 161–181 (VFLGAASGDLMTYIITSLQLA), and 201–221 (IFAVTQLPLAIGEGILTVIVL).

It belongs to the CbiM family. In terms of assembly, forms an energy-coupling factor (ECF) transporter complex composed of an ATP-binding protein (A component, CbiO), a transmembrane protein (T component, CbiQ) and 2 possible substrate-capture proteins (S components, CbiM and CbiN) of unknown stoichimetry.

The protein resides in the cell membrane. Its pathway is cofactor biosynthesis; adenosylcobalamin biosynthesis. Part of the energy-coupling factor (ECF) transporter complex CbiMNOQ involved in cobalt import. The sequence is that of Cobalt transport protein CbiM from Thermosediminibacter oceani (strain ATCC BAA-1034 / DSM 16646 / JW/IW-1228P).